The following is a 374-amino-acid chain: Protein TAB2 homolog, chloroplastic (374 aa).

Residues 1-64 constitute a chloroplast transit peptide; the sequence is MATLGFNTRR…SLSITKEQEV (64 aa). Positions 58-84 are disordered; it reads ITKEQEVANEVEEDDPTSELSYLDPES. Residues 64–74 are compositionally biased toward acidic residues; it reads VANEVEEDDPT.

Its subcellular location is the plastid. It localises to the chloroplast. In terms of biological role, nuclear genome-encoded A/U-rich RNA-binding protein involved in the biogenesis of photosystem I (PSI) and II (PSII). Required for the light-controlled accumulation of PSI and PSII during early plant development. Does not seem to be required for the translation of mRNAs of the PSI subunits. The polypeptide is Protein TAB2 homolog, chloroplastic (Arabidopsis thaliana (Mouse-ear cress)).